A 57-amino-acid polypeptide reads, in one-letter code: Large ribosomal subunit protein bL32 (57 aa).

Positions Met-1–Gln-19 are enriched in basic residues. Residues Met-1–Ala-22 form a disordered region.

Belongs to the bacterial ribosomal protein bL32 family.

This is Large ribosomal subunit protein bL32 from Mycobacterium tuberculosis (strain ATCC 25177 / H37Ra).